Here is a 202-residue protein sequence, read N- to C-terminus: Protein lin-28 homolog A (202 aa).

Disordered stretches follow at residues 1–33 and 100–128; these read MPPANPHLNHTGGCTKTEEEEAASSEEDSGSFH and SLQVTGPGGAPCVGSEKKPKGTQKRRSKG. Over residues 18 to 29 the composition is skewed to acidic residues; it reads EEEEAASSEEDS. The CSD domain maps to 33 to 106; that stretch reads HGSGVCKWFN…GLESLQVTGP (74 aa). A flexible linker region spans residues 107-130; sequence GGAPCVGSEKKPKGTQKRRSKGDR. 2 consecutive CCHC-type zinc fingers follow at residues 129-146 and 151-168; these read DRCFNCGGPNHHAKECQL and KKCHFCQSISHMVANCPI. Zn(2+) is bound by residues C131, C134, H139, C144, C153, C156, H161, and C166. Residues 170-202 form a disordered region; the sequence is AQQLSPGSQGKSTTSTGEEEDMSHTPLLPESTD. Over residues 171 to 185 the composition is skewed to polar residues; that stretch reads QQLSPGSQGKSTTST. At S174 the chain carries Phosphoserine.

It belongs to the lin-28 family. In terms of assembly, monomer.

It is found in the cytoplasm. It localises to the rough endoplasmic reticulum. The protein resides in the P-body. Its subcellular location is the stress granule. The protein localises to the nucleus. It is found in the nucleolus. Functionally, RNA-binding protein that inhibits processing of pre-let-7 miRNAs and regulates translation of mRNAs that control developmental timing, pluripotency and metabolism. Seems to recognize a common structural G-quartet (G4) feature in its miRNA and mRNA targets. 'Translational enhancer' that drives specific mRNAs to polysomes and increases the efficiency of protein synthesis. Its association with the translational machinery and target mRNAs results in an increased number of initiation events per molecule of mRNA and, indirectly, in mRNA stabilization. Suppressor of microRNA (miRNA) biogenesis, including that of let-7. Binds specific target miRNA precursors (pre-miRNAs), recognizing an 5'-GGAG-3' motif found in their terminal loop, and recruits uridylyltransferase. This results in the terminal uridylation of target pre-miRNAs. Uridylated pre-miRNAs fail to be processed by Dicer and undergo degradation. Localized to the periendoplasmic reticulum area, binds to a large number of spliced mRNAs and inhibits the translation of mRNAs destined for the ER, reducing the synthesis of transmembrane proteins, ER or Golgi lumen proteins, and secretory proteins. Binds to and enhances the translation of mRNAs for several metabolic enzymes, increasing glycolysis and oxidative phosphorylation. Which, with the let-7 repression may enhance tissue repair in adult tissue. The protein is Protein lin-28 homolog A (lin28a) of Danio rerio (Zebrafish).